We begin with the raw amino-acid sequence, 473 residues long: 3-isopropylmalate dehydratase large subunit (473 aa).

C354, C414, and C417 together coordinate [4Fe-4S] cluster.

The protein belongs to the aconitase/IPM isomerase family. LeuC type 1 subfamily. Heterodimer of LeuC and LeuD. It depends on [4Fe-4S] cluster as a cofactor.

It catalyses the reaction (2R,3S)-3-isopropylmalate = (2S)-2-isopropylmalate. Its pathway is amino-acid biosynthesis; L-leucine biosynthesis; L-leucine from 3-methyl-2-oxobutanoate: step 2/4. Functionally, catalyzes the isomerization between 2-isopropylmalate and 3-isopropylmalate, via the formation of 2-isopropylmaleate. This chain is 3-isopropylmalate dehydratase large subunit, found in Mycobacterium bovis (strain ATCC BAA-935 / AF2122/97).